A 555-amino-acid polypeptide reads, in one-letter code: 4-coumarate--CoA ligase-like 9 (555 aa).

Positions 200, 201, 202, 203, 204, and 208 each coordinate ATP. Tyr-248 is a binding site for (E)-4-coumaroyl-AMP. Arg-269 contributes to the CoA binding site. Residues 271–342 (DLRTFLRALV…RKFPGVQVEE (72 aa)) form an SBD1 region. A (E)-4-coumaroyl-AMP-binding site is contributed by Ala-320. Positions 342, 343, 347, 431, and 446 each coordinate ATP. Positions 343 and 347 each coordinate (E)-4-coumaroyl-AMP. Positions 343–410 (AYGLTEHSCI…VRSQSVMQGY (68 aa)) are SBD2. Positions 448 and 452 each coordinate (E)-4-coumaroyl-AMP. Residues Lys-454 and Gly-455 each contribute to the CoA site. Lys-537 serves as a coordination point for ATP.

The protein belongs to the ATP-dependent AMP-binding enzyme family. Interacts with STS1. It depends on Mg(2+) as a cofactor.

It carries out the reaction (E)-4-coumarate + ATP + CoA = (E)-4-coumaroyl-CoA + AMP + diphosphate. The enzyme catalyses (E)-4-coumarate + ATP + H(+) = (E)-4-coumaroyl-AMP + diphosphate. It catalyses the reaction (E)-4-coumaroyl-AMP + CoA = (E)-4-coumaroyl-CoA + AMP + H(+). Its function is as follows. Carboxylate--CoA ligase that may use 4-coumarate as substrate. Follows a two-step reaction mechanism, wherein the carboxylate substrate first undergoes adenylation by ATP, followed by a thioesterification in the presence of CoA to yield the final CoA thioester. In Oryza sativa subsp. japonica (Rice), this protein is 4-coumarate--CoA ligase-like 9 (4CLL9).